The chain runs to 184 residues: NADH-quinone oxidoreductase subunit J (184 aa).

A helical membrane pass occupies residues 1–21; it reads MEFAFYICGLIAILATLRVIT. The Cytoplasmic segment spans residues 22 to 27; the sequence is HTNPVH. A helical transmembrane segment spans residues 28 to 48; it reads ALLYLIISLLAISGVFFSLGA. Residues 49 to 53 are Periplasmic-facing; that stretch reads YFAGA. The helical transmembrane segment at 54-74 threads the bilayer; the sequence is LEIIVYAGAIMVLFVFVVMML. At 75 to 91 the chain is on the cytoplasmic side; it reads NLGGSEIEQERQWLKPQ. Residues 92–112 traverse the membrane as a helical segment; sequence VWIGPAILSAIMLVVIVYAIL. Over 113–137 the chain is Periplasmic; sequence GVNDQGIDGTPISAKAVGITLFGPY. Residues 138–158 form a helical membrane-spanning segment; sequence VLAVELASMLLLAGLVVAFHV. Residues 159–184 lie on the Cytoplasmic side of the membrane; that stretch reads GREERAGEVLSNRKDDSAKRKTEEHA.

The protein belongs to the complex I subunit 6 family. In terms of assembly, composed of 13 different subunits. Subunits NuoA, H, J, K, L, M, N constitute the membrane sector of the complex.

It localises to the cell inner membrane. It catalyses the reaction a quinone + NADH + 5 H(+)(in) = a quinol + NAD(+) + 4 H(+)(out). Its function is as follows. NDH-1 shuttles electrons from NADH, via FMN and iron-sulfur (Fe-S) centers, to quinones in the respiratory chain. The immediate electron acceptor for the enzyme in this species is believed to be ubiquinone. Couples the redox reaction to proton translocation (for every two electrons transferred, four hydrogen ions are translocated across the cytoplasmic membrane), and thus conserves the redox energy in a proton gradient. The chain is NADH-quinone oxidoreductase subunit J (nuoJ) from Escherichia coli O157:H7.